An 84-amino-acid polypeptide reads, in one-letter code: AIFKSYCEIIVTHFPFDEQNCSMKLGTWTYDGSKVAINAESEHPDLSNFMESGEWVIKEARGWKHWVFYACCPTTPYLDITYHF.

Cystine bridges form between cysteine 7-cysteine 21 and cysteine 71-cysteine 72. A glycan (N-linked (GlcNAc...) asparagine) is linked at asparagine 20.

It belongs to the ligand-gated ion channel (TC 1.A.9) family. Acetylcholine receptor (TC 1.A.9.1) subfamily. Alpha-1/CHRNA1 sub-subfamily. In terms of assembly, one of the alpha chains that assemble within the acetylcholine receptor, a pentamer of two alpha chains, a beta, a delta, and a gamma (in immature muscle) or epsilon (in mature muscle) chains. The muscle heteropentamer composed of alpha-1, beta-1, delta, epsilon subunits interacts with the alpha-conotoxin ImII.

It localises to the postsynaptic cell membrane. It is found in the cell membrane. The enzyme catalyses K(+)(in) = K(+)(out). It catalyses the reaction Na(+)(in) = Na(+)(out). In terms of biological role, upon acetylcholine binding, the AChR responds by an extensive change in conformation that affects all subunits and leads to opening of an ion-conducting channel across the plasma membrane. The polypeptide is Acetylcholine receptor subunit alpha (CHRNA1) (Crocidura russula (Greater white-toothed shrew)).